The primary structure comprises 76 residues: MQLVLAAKYIGAAIATIGLTGAGIGIAIVFAALINGTSRNPSLRNTLFPFAILGFALSEATGLFCLMISFLLLYGV.

Met-1 bears the N-formylmethionine mark. The next 2 membrane-spanning stretches (helical) occupy residues 14-34 (IATI…AALI) and 52-72 (ILGF…SFLL).

F-type ATP synthases have 2 components, the catalytic core F(1) and the membrane-embedded component F(0), linked together by a central stalk and a peripheral stalk. The central stalk, also called rotor shaft, is often seen as part of F(1). The peripheral stalk is seen as part of F(0). F(0) contains the membrane channel next to the rotor. F-type ATP synthases form dimers but each monomer functions independently in ATP generation. The dimer consists of 18 different polypeptides: ATP1 (subunit alpha, part of F(1), 3 molecules per monomer), ATP2 (subunit beta, part of F(1), 3 molecules per monomer), ATP3 (subunit gamma, part of the central stalk), ATP4 (subunit b, part of the peripheral stalk), ATP5/OSCP (subunit 5/OSCP, part of the peripheral stalk), ATP6 (subunit a, part of the peripheral stalk), ATP7 (subunit d, part of the peripheral stalk), ATP8 (subunit 8, part of the peripheral stalk), OLI1 (subunit c, part of the rotor, 10 molecules per monomer), ATP14 (subunit h, part of the peripheral stalk), ATP15 (subunit epsilon, part of the central stalk), ATP16 (subunit delta, part of the central stalk), ATP17 (subunit f, part of the peripheral stalk), ATP18 (subunit i/j, part of the peripheral stalk). Dimer-specific subunits are ATP19 (subunit k, at interface between monomers), ATP20 (subunit g, at interface between monomers), TIM11 (subunit e, at interface between monomers). Also contains subunit L.

The protein localises to the mitochondrion inner membrane. Functionally, mitochondrial membrane ATP synthase (F(1)F(0) ATP synthase or Complex V) produces ATP from ADP in the presence of a proton gradient across the membrane which is generated by electron transport complexes of the respiratory chain. F-type ATP synthases consist of two structural domains, F(1) - containing the extramembraneous catalytic core, and F(0) - containing the membrane proton channel, linked together by a central stalk and a peripheral stalk. During catalysis, ATP synthesis in the catalytic domain of F(1) is coupled via a rotary mechanism of the central stalk subunits to proton translocation. Part of the complex F(0) domain. A homomeric c-ring of 10 OLI1/ATP9 subunits is part of the complex rotary element. This chain is ATP synthase subunit 9, mitochondrial, found in Pichia angusta (Yeast).